Reading from the N-terminus, the 95-residue chain is Aspartyl/glutamyl-tRNA(Asn/Gln) amidotransferase subunit C (95 aa).

Belongs to the GatC family. As to quaternary structure, heterotrimer of A, B and C subunits.

The catalysed reaction is L-glutamyl-tRNA(Gln) + L-glutamine + ATP + H2O = L-glutaminyl-tRNA(Gln) + L-glutamate + ADP + phosphate + H(+). It carries out the reaction L-aspartyl-tRNA(Asn) + L-glutamine + ATP + H2O = L-asparaginyl-tRNA(Asn) + L-glutamate + ADP + phosphate + 2 H(+). Its function is as follows. Allows the formation of correctly charged Asn-tRNA(Asn) or Gln-tRNA(Gln) through the transamidation of misacylated Asp-tRNA(Asn) or Glu-tRNA(Gln) in organisms which lack either or both of asparaginyl-tRNA or glutaminyl-tRNA synthetases. The reaction takes place in the presence of glutamine and ATP through an activated phospho-Asp-tRNA(Asn) or phospho-Glu-tRNA(Gln). The chain is Aspartyl/glutamyl-tRNA(Asn/Gln) amidotransferase subunit C from Vesicomyosocius okutanii subsp. Calyptogena okutanii (strain HA).